The following is a 2273-amino-acid chain: MGFVRQIQLLLWKNWTLRKRQKIRFVVELVWPLSLFLVLIWLRNANPLYSHHECHFPNKAMPSAGMLPWLQGIFCNVNNPCFQSPTPGESPGIVSNYNNSILARVYRDFQELLMNAPESQHLGRIWTELHILSQFMDTLRTHPERIAGRGIRIRDILKDEETLTLFLIKNIGLSDSVVYLLINSQVRPEQFAHGVPDLALKDIACSEALLERFIIFSQRRGAKTVRYALCSLSQGTLQWIEDTLYANVDFFKLFRVLPTLLDSRSQGINLRSWGGILSDMSPRIQEFIHRPSMQDLLWVTRPLMQNGGPETFTKLMGILSDLLCGYPEGGGSRVLSFNWYEDNNYKAFLGIDSTRKDPIYSYDRRTTSFCNALIQSLESNPLTKIAWRAAKPLLMGKILYTPDSPAARRILKNANSTFEELEHVRKLVKAWEEVGPQIWYFFDNSTQMNMIRDTLGNPTVKDFLNRQLGEEGITAEAILNFLYKGPRESQADDMANFDWRDIFNITDRTLRLVNQYLECLVLDKFESYNDETQLTQRALSLLEENMFWAGVVFPDMYPWTSSLPPHVKYKIRMDIDVVEKTNKIKDRYWDSGPRADPVEDFRYIWGGFAYLQDMVEQGITRSQVQAEAPVGIYLQQMPYPCFVDDSFMIILNRCFPIFMVLAWIYSVSMTVKSIVLEKELRLKETLKNQGVSNAVIWCTWFLDSFSIMSMSIFLLTIFIMHGRILHYSDPFILFLFLLAFSTATIMLCFLLSTFFSKASLAAACSGVIYFTLYLPHILCFAWQDRMTAELKKAVSLLSPVAFGFGTEYLVRFEEQGLGLQWSNIGNSPTEGDEFSFLLSMQMMLLDAAVYGLLAWYLDQVFPGDYGTPLPWYFLLQESYWLGGEGCSTREERALEKTEPLTEETEDPEHPEGIHDSFFEREHPGWVPGVCVKNLVKIFEPCGRPAVDRLNITFYENQITAFLGHNGAGKTTTLSILTGLLPPTSGTVLVGGRDIETSLDAVRQSLGMCPQHNILFHHLTVAEHMLFYAQLKGKSQEEAQLEMEAMLEDTGLHHKRNEEAQDLSGGMQRKLSVAIAFVGDAKVVILDEPTSGVDPYSRRSIWDLLLKYRSGRTIIMSTHHMDEADLLGDRIAIIAQGRLYCSGTPLFLKNCFGTGLYLTLVRKMKNIQSQRKGSEGTCSCSSKGFSTTCPAHVDDLTPEQVLDGDVNELMDVVLHHVPEAKLVECIGQELIFLLPNKNFKHRAYASLFRELEETLADLGLSSFGISDTPLEEIFLKVTEDSDSGPLFAGGAQQKRENVNPRHPCLGPREKAGQTPQDSNVCSPGAPAAHPEGQPPPEPECPGPQLNTGTQLVLQHVQALLVKRFQHTIRSHKDFLAQIVLPATFVFLALMLSIVIPPFGEYPALTLHPWIYGQQYTFFSMDEPGSEQFTVLADVLLNKPGFGNRCLKEGWLPEYPCGNSTPWKTPSVSPNITQLFQKQKWTQVNPSPSCRCSTREKLTMLPECPEGAGGLPPPQRTQRSTEILQDLTDRNISDFLVKTYPALIRSSLKSKFWVNEQRYGGISIGGKLPVVPITGEALVGFLSDLGRIMNVSGGPITREASKEIPDFLKHLETEDNIKVWFNNKGWHALVSFLNVAHNAILRASLPKDRSPEEYGITVISQPLNLTKEQLSEITVLTTSVDAVVAICVIFSMSFVPASFVLYLIQERVNKSKHLQFISGVSPTTYWVTNFLWDIMNYSVSAGLVVGIFIGFQKKAYTSPENLPALVALLLLYGWAVIPMMYPASFLFDVPSTAYVALSCANLFIGINSSAITFILELFENNRTLLRFNAVLRKLLIVFPHFCLGRGLIDLALSQAVTDVYARFGEEHSANPFHWDLIGKNLFAMVVEGVVYFLLTLLVQRHFFLSQWIAEPTKEPIVDEDDDVAEERQRIITGGNKTDILRLHELTKIYPGTSSPAVDRLCVGVRPGECFGLLGVNGAGKTTTFKMLTGDTTVTSGDATVAGKSILTNISEVHQNMGYCPQFDAIDELLTGREHLYLYARLRGVPAEEIEKVANWSIKSLGLTVYADCLAGTYSGGNKRKLSTAIALIGCPPLVLLDEPTTGMDPQARRMLWNVIVSIIREGRAVVLTSHSMEECEALCTRLAIMVKGAFRCMGTIQHLKSKFGDGYIVTMKIKSPKDDLLPDLNPVEQFFQGNFPGSVQRERHYNMLQFQVSSSSLARIFQLLLSHKDSLLIEEYSVTQTTLDQVFVNFAKQQTESHDLPLHPRAAGASRQAQD.

Over 1–21 (MGFVRQIQLLLWKNWTLRKRQ) the chain is Cytoplasmic. Residues 22–42 (KIRFVVELVWPLSLFLVLIWL) form a helical membrane-spanning segment. The Extracellular portion of the chain corresponds to 43–646 (RNANPLYSHH…MPYPCFVDDS (604 aa)). Intrachain disulfides connect C54–C81 and C75–C324. An N-linked (GlcNAc...) asparagine glycan is attached at N98. The Mg(2+) site is built by S336 and N338. A disulfide bridge links C370 with C519. 3 N-linked (GlcNAc...) asparagine glycosylation sites follow: N415, N444, and N504. 2 residues coordinate an N-all-trans-retinylidenephosphatidylethanolamine: R587 and R653. 3 cysteine pairs are disulfide-bonded: C641-C1490, C1444-C1455, and C1488-C1502. The chain crosses the membrane as a helical span at residues 647 to 667 (FMIILNRCFPIFMVLAWIYSV). At 668-699 (SMTVKSIVLEKELRLKETLKNQGVSNAVIWCT) the chain is on the cytoplasmic side. The helical transmembrane segment at 700-720 (WFLDSFSIMSMSIFLLTIFIM) threads the bilayer. Topologically, residues 721-730 (HGRILHYSDP) are extracellular. The helical transmembrane segment at 731-751 (FILFLFLLAFSTATIMLCFLL) threads the bilayer. The Cytoplasmic segment spans residues 752–759 (STFFSKAS). A helical transmembrane segment spans residues 760–780 (LAAACSGVIYFTLYLPHILCF). The Extracellular segment spans residues 781–835 (AWQDRMTAELKKAVSLLSPVAFGFGTEYLVRFEEQGLGLQWSNIGNSPTEGDEFS). The helical transmembrane segment at 836–856 (FLLSMQMMLLDAAVYGLLAWY) threads the bilayer. Residues 857–1376 (LDQVFPGDYG…IRSHKDFLAQ (520 aa)) lie on the Cytoplasmic side of the membrane. Positions 891–911 (ERALEKTEPLTEETEDPEHPE) are disordered. T901 bears the Phosphothreonine mark. Positions 929–1160 (VCVKNLVKIF…FGTGLYLTLV (232 aa)) constitute an ABC transporter 1 domain. ATP-binding residues include F938, G966, and K969. T970 contacts Mg(2+). T971, Q1010, K1054, G1064, G1065, and H1118 together coordinate ATP. The residue at position 1185 (S1185) is a Phosphoserine. The segment at 1284–1345 (PLFAGGAQQK…EPECPGPQLN (62 aa)) is disordered. Position 1313 is a phosphothreonine (T1313). Position 1317 is a phosphoserine (S1317). Positions 1331 to 1340 (GQPPPEPECP) are enriched in pro residues. A helical membrane pass occupies residues 1377–1397 (IVLPATFVFLALMLSIVIPPF). Residues 1398–1727 (GEYPALTLHP…VSPTTYWVTN (330 aa)) are Extracellular-facing. N1469 carries an N-linked (GlcNAc...) asparagine glycan. N-linked (GlcNAc...) asparagine glycosylation is found at N1529, N1588, and N1662. The chain crosses the membrane as a helical span at residues 1728–1748 (FLWDIMNYSVSAGLVVGIFIG). The Cytoplasmic segment spans residues 1749–1759 (FQKKAYTSPEN). Residues 1760–1780 (LPALVALLLLYGWAVIPMMYP) traverse the membrane as a helical segment. Residues 1781–1792 (ASFLFDVPSTAY) lie on the Extracellular side of the membrane. The chain crosses the membrane as a helical span at residues 1793-1813 (VALSCANLFIGINSSAITFIL). Over 1814-1831 (ELFENNRTLLRFNAVLRK) the chain is Cytoplasmic. The chain crosses the membrane as a helical span at residues 1832–1852 (LLIVFPHFCLGRGLIDLALSQ). The Extracellular portion of the chain corresponds to 1853–1873 (AVTDVYARFGEEHSANPFHWD). The chain crosses the membrane as a helical span at residues 1874-1894 (LIGKNLFAMVVEGVVYFLLTL). Topologically, residues 1895-2273 (LVQRHFFLSQ…AAGASRQAQD (379 aa)) are cytoplasmic. The 233-residue stretch at 1938-2170 (LRLHELTKIY…FGDGYIVTMK (233 aa)) folds into the ABC transporter 2 domain. ATP contacts are provided by N1974, G1975, K1978, T1979, T1980, and G2073. T1979 contributes to the Mg(2+) binding site. The essential for ATP binding and ATPase activity stretch occupies residues 2244-2249 (VFVNFA).

Belongs to the ABC transporter superfamily. ABCA family. In terms of processing, proteolytic cleavage by trypsin leads to a 120-kDa N-terminal fragment and a 115-kDa C-terminal fragment that are linked through disulfide bonds. Post-translationally, N-glycosylated. Phosphorylation is independent of light exposure and modulates ATPase activity. In terms of tissue distribution, retinal-specific. Seems to be exclusively found in the rims of rod photoreceptor cells.

It localises to the membrane. The protein localises to the endoplasmic reticulum. Its subcellular location is the cytoplasmic vesicle. It is found in the cell projection. The protein resides in the cilium. It localises to the photoreceptor outer segment. The enzyme catalyses an N-all-trans-retinylidenephosphatidylethanolamine(out) + ATP + H2O = an N-all-trans-retinylidenephosphatidylethanolamine(in) + ADP + phosphate + H(+). It catalyses the reaction ATP + H2O + phospholipidSide 1 = ADP + phosphate + phospholipidSide 2.. It carries out the reaction a 1,2-diacyl-sn-glycero-3-phosphoethanolamine(out) + ATP + H2O = a 1,2-diacyl-sn-glycero-3-phosphoethanolamine(in) + ADP + phosphate + H(+). The catalysed reaction is N-11-cis-retinylidenephosphatidylethanolamine(out) + ATP + H2O = N-11-cis-retinylidenephosphatidylethanolamine(in) + ADP + phosphate + H(+). The enzyme catalyses ATP + H2O = ADP + phosphate + H(+). Its activity is regulated as follows. ATPase activity is decreased by cholesterol and ceramide. Phospholipids translocase activity is highly reduced by berylium fluoride and aluminum floride. N-ethylmaleimide inhibits phospholipid translocase activity. Flippase that catalyzes in an ATP-dependent manner the transport of retinal-phosphatidylethanolamine conjugates like 11-cis and all-trans isomers of N-retinylidene-phosphatidylethanolamine (N-Ret-PE) from the lumen to the cytoplasmic leaflet of photoreceptor outer segment disk membranes, where 11-cis-retinylidene-phosphatidylethanolamine is then isomerized to its all-trans isomer and reduced by RDH8 to produce all-trans-retinol. This transport activity ensures that all-trans-retinal generated from photoexcitation and 11-cis-retinal not needed for the regeneration of rhodopsin and cone opsins are effectively cleared from the photoreceptors, therefore preventing their accumulation and the formation of toxic bisretinoid. Displays ATPase activity in vitro in absence of retinal substrate. May display GTPase activity that is strongly influenced by the lipid environment and the presence of retinoid compounds. Binds the unprotonated form of N-retinylidene-phosphatidylethanolamine with high affinity in the absence of ATP, and ATP binding and hydrolysis induce a protein conformational change that causes N-retinylidene-phosphatidylethanolamine release. This Homo sapiens (Human) protein is Retinal-specific phospholipid-transporting ATPase ABCA4.